Here is a 354-residue protein sequence, read N- to C-terminus: Membrane progestin receptor alpha-B (354 aa).

The Cytoplasmic segment spans residues 1 to 76; sequence MATVVMEQIG…LTLFQRHNES (76 aa). The helical transmembrane segment at 77 to 97 threads the bilayer; that stretch reads VNVWTHLLASLIILVKFQELS. Residues 98–110 lie on the Extracellular side of the membrane; it reads ETVDFLRDPHAQP. Residues 111 to 131 form a helical membrane-spanning segment; it reads MFILLLAAFTYLGCSALAHLL. The Cytoplasmic segment spans residues 132-141; the sequence is SAKSEISHYT. Residues 142–162 traverse the membrane as a helical segment; it reads FYFLDYVGVAVYQYGSALAHF. Topologically, residues 163-175 are extracellular; it reads YYVVEEEWHAQVR. The helical transmembrane segment at 176–196 threads the bilayer; the sequence is TFFLPASAFLAWLSCTGCCYG. Residues 197–244 lie on the Cytoplasmic side of the membrane; it reads KYASPKLPKFVHKLFQVVPSGLAYCLDISPVLHRIYRCYSSEHWCADQ. A helical transmembrane segment spans residues 245–265; sequence AVVYHCYQVLFFLISAYFFSY. Residues 266–277 lie on the Extracellular side of the membrane; the sequence is PHPERWFPGRCD. Residues 278–298 form a helical membrane-spanning segment; sequence FIGQGHQIFHVFLVLCTLVQI. The Cytoplasmic portion of the chain corresponds to 299–318; the sequence is EAVRLDYTERRRLYEHLHGD. Residues 319-339 traverse the membrane as a helical segment; it reads LAHDAVALFIFTACCSALTAF. Residues 340–354 lie on the Extracellular side of the membrane; the sequence is YVRKRVKTYLEEKQE.

It belongs to the ADIPOR family.

It is found in the cell membrane. In terms of biological role, steroid membrane receptor. Signals upon progestin binding, resulting in rapid activation of MAPK and down-regulation of adenylyl cyclase activity. Interacts with steroids with varying degrees of affinity, showing specificity for activation by the maturation-inducing steroid (MIS) 4-pregnen-17,20beta-diol-3-one (17,20beta-DHP). Capable of mediating progestin-induced oocyte maturation. The chain is Membrane progestin receptor alpha-B (paqr7b) from Danio rerio (Zebrafish).